The primary structure comprises 84 residues: Large ribosomal subunit protein bL27 (84 aa).

This sequence belongs to the bacterial ribosomal protein bL27 family.

The polypeptide is Large ribosomal subunit protein bL27 (Buchnera aphidicola subsp. Acyrthosiphon pisum (strain Tuc7)).